Consider the following 301-residue polypeptide: Diaminopimelate epimerase (301 aa).

Positions 15, 47, and 67 each coordinate substrate. The active-site Proton donor is the C76. Substrate-binding positions include 77–78, N163, N197, and 215–216; these read GN and ER. The active-site Proton acceptor is C224. 225–226 contacts substrate; sequence GS.

Belongs to the diaminopimelate epimerase family. As to quaternary structure, homodimer.

The protein resides in the cytoplasm. The catalysed reaction is (2S,6S)-2,6-diaminopimelate = meso-2,6-diaminopimelate. It functions in the pathway amino-acid biosynthesis; L-lysine biosynthesis via DAP pathway; DL-2,6-diaminopimelate from LL-2,6-diaminopimelate: step 1/1. Its function is as follows. Catalyzes the stereoinversion of LL-2,6-diaminopimelate (L,L-DAP) to meso-diaminopimelate (meso-DAP), a precursor of L-lysine and an essential component of the bacterial peptidoglycan. The polypeptide is Diaminopimelate epimerase (Rhizobium meliloti (strain 1021) (Ensifer meliloti)).